A 1039-amino-acid polypeptide reads, in one-letter code: Error-prone DNA polymerase (1039 aa).

It belongs to the DNA polymerase type-C family. DnaE2 subfamily.

It localises to the cytoplasm. It catalyses the reaction DNA(n) + a 2'-deoxyribonucleoside 5'-triphosphate = DNA(n+1) + diphosphate. In terms of biological role, DNA polymerase involved in damage-induced mutagenesis and translesion synthesis (TLS). It is not the major replicative DNA polymerase. The chain is Error-prone DNA polymerase from Corynebacterium diphtheriae (strain ATCC 700971 / NCTC 13129 / Biotype gravis).